The following is a 260-amino-acid chain: Proliferating cell nuclear antigen (260 aa).

A DNA-binding region spans residues 61–80; sequence RCDRNLAMGVNLSSMSKILK. Residue Lys164 forms a Glycyl lysine isopeptide (Lys-Gly) (interchain with G-Cter in ubiquitin) linkage. 2 positions are modified to phosphoserine: Ser259 and Ser260.

It belongs to the PCNA family. In terms of assembly, homotrimer. Forms a complex with activator 1 heteropentamer in the presence of ATP. Component of the replisome complex. Monoubiquitinated by the ube2b-rad18 complex on Lys-164. Monoubiquitination at Lys-164 also takes place in undamaged proliferating cells, and is mediated by the dcx(dtl) complex, leading to enhance PCNA-dependent translesion DNA synthesis.

It localises to the nucleus. Its function is as follows. This protein is an auxiliary protein of DNA polymerase delta and is involved in the control of eukaryotic DNA replication by increasing the polymerase's processibility during elongation of the leading strand. This chain is Proliferating cell nuclear antigen (pcna), found in Danio rerio (Zebrafish).